The chain runs to 423 residues: Phosphoribosylamine--glycine ligase (423 aa).

The 208-residue stretch at 107–314 (KAFMAKYNIP…LSDLVEAAID (208 aa)) folds into the ATP-grasp domain. ATP is bound at residue 133-194 (VNQKGAPIVI…EDFLQGEEAS (62 aa)). Glu284 and Asn286 together coordinate Mg(2+).

The protein belongs to the GARS family. Mg(2+) is required as a cofactor. Mn(2+) serves as cofactor.

It carries out the reaction 5-phospho-beta-D-ribosylamine + glycine + ATP = N(1)-(5-phospho-beta-D-ribosyl)glycinamide + ADP + phosphate + H(+). The protein operates within purine metabolism; IMP biosynthesis via de novo pathway; N(1)-(5-phospho-D-ribosyl)glycinamide from 5-phospho-alpha-D-ribose 1-diphosphate: step 2/2. This Neisseria meningitidis serogroup A / serotype 4A (strain DSM 15465 / Z2491) protein is Phosphoribosylamine--glycine ligase.